The sequence spans 817 residues: Dolichyl-phosphate-mannose--protein mannosyltransferase 1 (817 aa).

Serine 2 carries the post-translational modification N-acetylserine. Topologically, residues 2–50 (SEEKTYKRVEQDDPVPELDIKQGPVRPFIVTDPSAELASLRTMVTLKEK) are cytoplasmic. The chain crosses the membrane as a helical span at residues 51–70 (LLVACLAVFTAVIRLHGLAW). Over 71–135 (PDSVVFDEVH…DSFPSTTPYV (65 aa)) the chain is Lumenal. Residues 136–154 (LMRFFSASLGALTVILMYM) form a helical membrane-spanning segment. The Cytoplasmic segment spans residues 155-179 (TLRYSGVRMWVALMSAICFAVENSY). The chain crosses the membrane as a helical span at residues 180 to 200 (VTISRYILLDAPLMFFIAAAV). Topologically, residues 201-234 (YSFKKYEMYPANSLNAYKSLLATGIALGMASSSK) are lumenal. Residues 235 to 259 (WVGLFTVTWVGLLCIWRLWFMIGDL) form a helical membrane-spanning segment. Topologically, residues 260–273 (TKSSKSIFKVAFAK) are cytoplasmic. A helical membrane pass occupies residues 274–291 (LAFLLGVPFALYLVFFYI). The Lumenal portion of the chain corresponds to 292-584 (HFQSLTLDGD…GENNRNVYLL (293 aa)). 3 consecutive MIR domains span residues 324–378 (VADV…LELY), 388–448 (FQNL…VEID), and 459–514 (ERVI…VENN). N-linked (GlcNAc...) asparagine glycosylation is found at asparagine 390 and asparagine 513. Residues 585–605 (GNAIVWWAVTAFIGIFGLIVI) form a helical membrane-spanning segment. Residues 606 to 685 (TELFSWQLGK…SYVFRSKRQM (80 aa)) lie on the Cytoplasmic side of the membrane. The helical transmembrane segment at 686–710 (GYAVVITFLAASVYFFKSFSPIIYG) threads the bilayer. At 711–817 (TPWTQELCQK…LKVEKRAVLE (107 aa)) the chain is on the lumenal side. An N-linked (GlcNAc...) asparagine glycan is attached at asparagine 743.

It belongs to the glycosyltransferase 39 family. As to quaternary structure, PMT1 and PMT2 form a functional heterodimer. The complex interacts with endoplasmic reticulum proteins EMP24, ERV25, ERP1, ERP2, CDC48, HRD1, USA1, YOS9, ERO1, PDI1, UBR1, Cue4, DFM1 and TED1. Forms also a minor complex with PMT3.

The protein resides in the endoplasmic reticulum membrane. It carries out the reaction a di-trans,poly-cis-dolichyl beta-D-mannosyl phosphate + L-seryl-[protein] = 3-O-(alpha-D-mannosyl)-L-seryl-[protein] + a di-trans,poly-cis-dolichyl phosphate + H(+). The catalysed reaction is a di-trans,poly-cis-dolichyl beta-D-mannosyl phosphate + L-threonyl-[protein] = 3-O-(alpha-D-mannosyl)-L-threonyl-[protein] + a di-trans,poly-cis-dolichyl phosphate + H(+). It functions in the pathway protein modification; protein glycosylation. Its function is as follows. Protein O-mannosyltransferase involved in O-glycosylation which is essential for cell wall rigidity. Forms a heterodimeric complex with PMT2 and more rarely with PMT3 to transfer mannose from Dol-P-mannose to Ser or Thr residues on proteins. The PMT1-PMT2 complex participates in oxidative protein folding, ER-associated protein degradation (ERAD), as well as ER export. Required for incorporation of proteins in the cell wall. In Saccharomyces cerevisiae (strain ATCC 204508 / S288c) (Baker's yeast), this protein is Dolichyl-phosphate-mannose--protein mannosyltransferase 1.